Here is a 1387-residue protein sequence, read N- to C-terminus: DNA-directed RNA polymerase subunit beta'' (1387 aa).

Zn(2+) contacts are provided by Cys-224, Cys-295, Cys-302, and Cys-305. Positions Ser-883–Asp-903 are disordered.

This sequence belongs to the RNA polymerase beta' chain family. RpoC2 subfamily. In terms of assembly, in plastids the minimal PEP RNA polymerase catalytic core is composed of four subunits: alpha, beta, beta', and beta''. When a (nuclear-encoded) sigma factor is associated with the core the holoenzyme is formed, which can initiate transcription. Zn(2+) is required as a cofactor.

It is found in the plastid. Its subcellular location is the chloroplast. The catalysed reaction is RNA(n) + a ribonucleoside 5'-triphosphate = RNA(n+1) + diphosphate. In terms of biological role, DNA-dependent RNA polymerase catalyzes the transcription of DNA into RNA using the four ribonucleoside triphosphates as substrates. This chain is DNA-directed RNA polymerase subunit beta'', found in Platanus occidentalis (Sycamore).